Here is a 296-residue protein sequence, read N- to C-terminus: NADPH-dependent 1-acyldihydroxyacetone phosphate reductase (296 aa).

Residue isoleucine 9 participates in NADP(+) binding. The short motif at glycine 11 to glycine 15 is the GXSXG element. Residues threonine 35, arginine 41, aspartate 56, asparagine 84, lysine 117, tyrosine 148, lysine 152, valine 181, and threonine 183 each contribute to the NADP(+) site. The Proton donor role is filled by tyrosine 148. The Lowers pKa of active site Tyr role is filled by lysine 152.

This sequence belongs to the short-chain dehydrogenases/reductases (SDR) family.

Its subcellular location is the lipid droplet. It is found in the cytoplasm. It localises to the vacuole. The protein resides in the endoplasmic reticulum. The protein localises to the golgi apparatus. Its subcellular location is the mitochondrion outer membrane. The catalysed reaction is 1-hexadecanoyl-sn-glycero-3-phosphate + NADP(+) = 1-hexadecanoylglycerone 3-phosphate + NADPH + H(+). It catalyses the reaction a 1-acylglycerone 3-phosphate + NADPH + H(+) = a 1-acyl-sn-glycero-3-phosphate + NADP(+). It carries out the reaction a triacylglycerol + H2O = a diacylglycerol + a fatty acid + H(+). Functionally, can convert acyl and alkyl dihydroxyacetone-phosphate (DHAP) into glycerolipids and ether lipids, respectively. Required for the biosynthesis of phosphatidic acid via the DHAP pathway, where it reduces 1-acyl DHAP to lysophosphatidic acid (LPA). Also has triacylglycerol (TAG) lipase activity. Involved in the mobilization of the non-polar storage lipids triacylglycerols (TAGs) from lipid particles by hydrolysis of TAGs. Lipolysis of TAG by AYR1 is essential for starvation-induced autophagy. Forms an NADPH-regulated cation-selective channel in the mitochondrial outer membrane. This chain is NADPH-dependent 1-acyldihydroxyacetone phosphate reductase (ayr1), found in Schizosaccharomyces pombe (strain 972 / ATCC 24843) (Fission yeast).